The sequence spans 188 residues: PRA1 family protein 3 (188 aa).

Residue Met-1 is modified to N-acetylmethionine. At 1 to 35 (MEVQVAPLRSWEDFFPGSDRFGRPDFKDISKWNNR) the chain is on the cytoplasmic side. The next 2 helical transmembrane spans lie at 36–56 (VVNNLLYYQTNYLMVAAAVVA) and 57–77 (IVGFLSPLNMLIGGTVVILVF). Topologically, residues 78–93 (LGFVWVSHNKDILRRM) are cytoplasmic. Transmembrane regions (helical) follow at residues 94-114 (KKQYPTTFVIVIMLSSYFLIS) and 115-135 (YLGDVMVFMFGITLPLLLMFI). At 136-188 (HASLRLRNIKNKLENKKEEIGLKKTPMGIILDALEQQEDNINKLASYIPKVKE) the chain is on the cytoplasmic side. Residues 136 to 188 (HASLRLRNIKNKLENKKEEIGLKKTPMGIILDALEQQEDNINKLASYIPKVKE) form a targeting to endoplasmic reticulum membrane region.

The protein belongs to the PRA1 family. As to quaternary structure, binds to prenylated RAB and Ras superfamily members.

The protein localises to the endoplasmic reticulum membrane. The protein resides in the cell membrane. It localises to the cytoplasm. Its subcellular location is the cytoskeleton. Functionally, regulates intracellular concentrations of taurine and glutamate. Negatively modulates SLC1A1/EAAC1 glutamate transport activity by decreasing its affinity for glutamate in a PKC activity-dependent manner. May be involved in membrane traffic. This chain is PRA1 family protein 3 (ARL6IP5), found in Gallus gallus (Chicken).